The chain runs to 227 residues: Enolase-phosphatase E1 (227 aa).

It belongs to the HAD-like hydrolase superfamily. MasA/MtnC family. Monomer. Requires Mg(2+) as cofactor.

The catalysed reaction is 5-methylsulfanyl-2,3-dioxopentyl phosphate + H2O = 1,2-dihydroxy-5-(methylsulfanyl)pent-1-en-3-one + phosphate. It participates in amino-acid biosynthesis; L-methionine biosynthesis via salvage pathway; L-methionine from S-methyl-5-thio-alpha-D-ribose 1-phosphate: step 3/6. Its pathway is amino-acid biosynthesis; L-methionine biosynthesis via salvage pathway; L-methionine from S-methyl-5-thio-alpha-D-ribose 1-phosphate: step 4/6. Bifunctional enzyme that catalyzes the enolization of 2,3-diketo-5-methylthiopentyl-1-phosphate (DK-MTP-1-P) into the intermediate 2-hydroxy-3-keto-5-methylthiopentenyl-1-phosphate (HK-MTPenyl-1-P), which is then dephosphorylated to form the acireductone 1,2-dihydroxy-3-keto-5-methylthiopentene (DHK-MTPene). The polypeptide is Enolase-phosphatase E1 (Methylococcus capsulatus (strain ATCC 33009 / NCIMB 11132 / Bath)).